A 1133-amino-acid chain; its full sequence is Guanine nucleotide-binding protein G(s) subunit alpha isoforms XLas (1133 aa).

Disordered regions lie at residues 1–195 (MGMF…PEAL), 322–552 (DDTA…VPGA), 611–648 (SASA…WPDK), and 724–744 (RSRS…RKQM). The span at 31 to 48 (LEAPGAAAPGAGAGPAEE) shows a compositional bias: low complexity. Over residues 347 to 362 (DKSECAERPPVEREAA) the composition is skewed to basic and acidic residues. Composition is skewed to low complexity over residues 391-404 (PEAM…AAQA), 459-471 (GGAA…TPAE), 482-498 (AEPA…ESAS), 515-525 (ATLAEPAARAA), and 535-552 (RAVP…VPGA). The span at 633 to 643 (PPTPRPPPRPT) shows a compositional bias: pro residues. Residues 732–744 (KAKDPMEERRKQM) show a composition bias toward basic and acidic residues. The stretch at 737-761 (MEERRKQMRKEAIEMREQKRADKKR) forms a coiled coil. One can recognise a G-alpha domain in the interval 778–1133 (CTHRLLLLGA…RMHLRQYELL (356 aa)). Positions 781 to 794 (RLLLLGAGESGKST) are G1 motif. 786-794 (GAGESGKST) is a GTP binding site. Ser-793 provides a ligand contact to Mg(2+). The interval 807 to 828 (FNGEGGEEDPQAARSNSDGEKA) is disordered. A G2 motif region spans residues 935–943 (DLLRCRVLT). Residues 936 to 943 (LLRCRVLT), 962 to 966 (DVGGQ), and 1031 to 1034 (NKQD) each bind GTP. Arg-940 bears the ADP-ribosylarginine; by cholera toxin mark. Thr-943 is a Mg(2+) binding site. Residues 958–967 (FHMFDVGGQR) are G3 motif. The segment at 1027–1034 (ILFLNKQD) is G4 motif. At Ser-1091 the chain carries Phosphoserine. The tract at residues 1103–1108 (TCAVDT) is G5 motif. A GTP-binding site is contributed by Ala-1105.

It belongs to the G-alpha family. G(s) subfamily. In terms of assembly, g proteins are composed of 3 units; alpha, beta and gamma. The alpha chain contains the guanine nucleotide binding site. Interacts through its N-terminal region with ALEX which is produced from the same locus in a different open reading frame. This interaction may inhibit its adenylyl cyclase-stimulating activity. Interacts with MAGED2.

It is found in the cell membrane. The protein localises to the apical cell membrane. It carries out the reaction GTP + H2O = GDP + phosphate + H(+). Functionally, guanine nucleotide-binding proteins (G proteins) function as transducers in numerous signaling pathways controlled by G protein-coupled receptors (GPCRs). The alpha chain contains the guanine nucleotide binding site and alternates between an active, GTP-bound state and an inactive, GDP-bound state. Signaling by an activated GPCR promotes GDP release and GTP binding. The alpha subunit has a low GTPase activity that converts bound GTP to GDP, thereby terminating the signal. Both GDP release and GTP hydrolysis are modulated by numerous regulatory proteins. Signaling involves the activation of adenylyl cyclases, resulting in increased levels of the signaling molecule cAMP. GNAS functions downstream of several GPCRs, including beta-adrenergic receptors. XLas isoforms interact with the same set of receptors as Gnas isoforms. This chain is Guanine nucleotide-binding protein G(s) subunit alpha isoforms XLas, found in Mus musculus (Mouse).